We begin with the raw amino-acid sequence, 148 residues long: Large ribosomal subunit protein bL19 (148 aa).

It belongs to the bacterial ribosomal protein bL19 family.

This protein is located at the 30S-50S ribosomal subunit interface and may play a role in the structure and function of the aminoacyl-tRNA binding site. The protein is Large ribosomal subunit protein bL19 of Beijerinckia indica subsp. indica (strain ATCC 9039 / DSM 1715 / NCIMB 8712).